Reading from the N-terminus, the 38-residue chain is Beta-defensin 1 (38 aa).

3 cysteine pairs are disulfide-bonded: C5-C34, C12-C27, and C17-C35.

Belongs to the beta-defensin family. In terms of assembly, monomer. Homodimer. In terms of tissue distribution, neutrophilic granules.

The protein localises to the secreted. Its subcellular location is the membrane. Has bactericidal activity. Active against E.coli ML35 but not against S.aureus 502A. May act as a ligand for C-C chemokine receptor CCR6. Positively regulates the sperm motility and bactericidal activity in a CCR6-dependent manner. Binds to CCR6 and triggers Ca2+ mobilization in the sperm which is important for its motility. This chain is Beta-defensin 1 (DEFB1), found in Bos taurus (Bovine).